An 85-amino-acid chain; its full sequence is Large ribosomal subunit protein bL27 (85 aa).

The disordered stretch occupies residues 1 to 20 (MATKKAGGSTRNGRDSEAKR).

The protein belongs to the bacterial ribosomal protein bL27 family.

The protein is Large ribosomal subunit protein bL27 of Haemophilus influenzae (strain ATCC 51907 / DSM 11121 / KW20 / Rd).